We begin with the raw amino-acid sequence, 1438 residues long: MAMTEQQKFKVLADQIKISNQLDAEILNSGELTRIDVSNKNRTWEFHITLPQFLAHEDYLLFINAIEQEFKDIANVTCRFTVTNGTNQDEHAIKYFGHCIDQTALSPKVKGQLKQKKLIMSGKVLKVMVSNDIERNHFDKACNGSLIKAFRNCGFDIDKIIFETNDNDQEQNLASLEAHIQEEDEQSARLATEKLEKMKAEKAKQQDNNESAVDKCQIGKPIQIENIKPIESIIEEEFKVAIEGVIFDINLKELKSGRHIVEIKVTDYTDSLVLKMFTRKNKDDLEHFKALSVGKWVRAQGRIEEDTFIRDLVMMMSDIEEIKKATKKDKAEEKRVEFHLHTAMSQMDGIPNIGAYVKQAADWGHPAIAVTDHNVVQAFPDAHAAAEKHGIKMIYGMEGMLVDDGVPIAYKPQDVVLKDATYVVFDVETTGLSNQYDKIIELAAVKVHNGEIIDKFERFSNPHERLSETIINLTHITDDMLVDAPEIEEVLTEFKEWVGDAIFVAHNASFDMGFIDTGYERLGFGPSTNGVIDTLELSRTINTEYGKHGLNFLAKKYGVELTQHHRAIYDTEATAYIFIKMVQQMKELGVLNHNEINKKLSNEDAYKRARPSHVTLIVQNQQGLKNLFKIVSASLVKYFYRTPRIPRSLLDEYREGLLVGTACDEGELFTAVMQKDQSQVEKIAKYYDFIEIQPPALYQDLIDRELIRDTETLHEIYQRLIHAGDTAGIPVIATGNAHYLFEHDGIARKILIASQPGNPLNRSTLPEAHFRTTDEMLNEFHFLGEEKAHEIVVKNTNELADRIERVVPIKDELYTPRMEGANEEIRELSYANARKLYGEDLPQIVIDRLEKELKSIIGNGFAVIYLISQRLVKKSLDDGYLVGSRGSVGSSFVATMTEITEVNPLPPHYICPNCKTSEFFNDGSVGSGFDLPDKTCETCGAPLIKEGQDIPFETFLGFKGDKVPDIDLNFSGEYQPNAHNYTKVLFGEDKVFRAGTIGTVAEKTAFGYVKGYLNDQGIHKRGAEIDRLVKGCTGVKRTTGQHPGGIIVVPDYMDIYDFTPIQYPADDQNSAWMTTHFDFHSIHDNVLKLDILGHDDPTMIRMLQDLSGIDPKTIPVDDKEVMQIFSTPESLGVTEDEILCKTGTFGVPEFGTGFVRQMLEDTKPTTFSELVQISGLSHGTDVWLGNAQELIKTGICDLSSVIGCRDDIMVYLMYAGLEPSMAFKIMESVRKGKGLTEEMIETMKENEVPDWYLDSCLKIKYMFPKAHAAAYVLMAVRIAYFKVHHPLYYYASYFTIRASDFDLITMIKDKTSIRNTVKDMYSRYMDLGKKEKDVLTVLEIMNEMAHRGYRMQPISLEKSQAFEFIIEGDTLIPPFISVPGLGENVAKRIVEARDDGPFLSKEDLNKKAGLSQKIIEYLDELGSLPNLPDKAQLSIFDM.

Residues 422–578 form the Exonuclease domain; that stretch reads YVVFDVETTG…YDTEATAYIF (157 aa).

The protein belongs to the DNA polymerase type-C family. PolC subfamily.

Its subcellular location is the cytoplasm. It carries out the reaction DNA(n) + a 2'-deoxyribonucleoside 5'-triphosphate = DNA(n+1) + diphosphate. In terms of biological role, required for replicative DNA synthesis. This DNA polymerase also exhibits 3' to 5' exonuclease activity. This chain is DNA polymerase III PolC-type, found in Staphylococcus aureus (strain MSSA476).